Reading from the N-terminus, the 272-residue chain is Type III pantothenate kinase (272 aa).

Residue Asn-6 to Leu-13 participates in ATP binding. Residue Gly-113–Arg-116 participates in substrate binding. The active-site Proton acceptor is Asp-115. Residue Asp-135 coordinates K(+). Thr-138 is an ATP binding site. Residue Thr-190 participates in substrate binding.

The protein belongs to the type III pantothenate kinase family. As to quaternary structure, homodimer. The cofactor is NH4(+). K(+) serves as cofactor.

The protein resides in the cytoplasm. The enzyme catalyses (R)-pantothenate + ATP = (R)-4'-phosphopantothenate + ADP + H(+). It participates in cofactor biosynthesis; coenzyme A biosynthesis; CoA from (R)-pantothenate: step 1/5. Functionally, catalyzes the phosphorylation of pantothenate (Pan), the first step in CoA biosynthesis. This is Type III pantothenate kinase from Acidobacterium capsulatum (strain ATCC 51196 / DSM 11244 / BCRC 80197 / JCM 7670 / NBRC 15755 / NCIMB 13165 / 161).